The chain runs to 420 residues: Glucose-1-phosphate adenylyltransferase (420 aa).

Alpha-D-glucose 1-phosphate is bound by residues tyrosine 107, glycine 172, 187 to 188 (EK), and serine 205.

Belongs to the bacterial/plant glucose-1-phosphate adenylyltransferase family. As to quaternary structure, homotetramer.

The catalysed reaction is alpha-D-glucose 1-phosphate + ATP + H(+) = ADP-alpha-D-glucose + diphosphate. Its pathway is glycan biosynthesis; glycogen biosynthesis. Involved in the biosynthesis of ADP-glucose, a building block required for the elongation reactions to produce glycogen. Catalyzes the reaction between ATP and alpha-D-glucose 1-phosphate (G1P) to produce pyrophosphate and ADP-Glc. This chain is Glucose-1-phosphate adenylyltransferase, found in Rhodopseudomonas palustris (strain HaA2).